A 249-amino-acid polypeptide reads, in one-letter code: Enolase-phosphatase E1 (249 aa).

Residues aspartate 14 and glutamate 16 each contribute to the Mg(2+) site. Residues 141–142 (SS) and lysine 175 contribute to the substrate site. Aspartate 200 is a Mg(2+) binding site.

It belongs to the HAD-like hydrolase superfamily. MasA/MtnC family. Monomer. Mg(2+) serves as cofactor.

The protein localises to the cytoplasm. The protein resides in the nucleus. The enzyme catalyses 5-methylsulfanyl-2,3-dioxopentyl phosphate + H2O = 1,2-dihydroxy-5-(methylsulfanyl)pent-1-en-3-one + phosphate. It functions in the pathway amino-acid biosynthesis; L-methionine biosynthesis via salvage pathway; L-methionine from S-methyl-5-thio-alpha-D-ribose 1-phosphate: step 3/6. It participates in amino-acid biosynthesis; L-methionine biosynthesis via salvage pathway; L-methionine from S-methyl-5-thio-alpha-D-ribose 1-phosphate: step 4/6. Functionally, bifunctional enzyme that catalyzes the enolization of 2,3-diketo-5-methylthiopentyl-1-phosphate (DK-MTP-1-P) into the intermediate 2-hydroxy-3-keto-5-methylthiopentenyl-1-phosphate (HK-MTPenyl-1-P), which is then dephosphorylated to form the acireductone 1,2-dihydroxy-3-keto-5-methylthiopentene (DHK-MTPene). This chain is Enolase-phosphatase E1, found in Drosophila mojavensis (Fruit fly).